Reading from the N-terminus, the 369-residue chain is Ferrochelatase (369 aa).

H210 and E291 together coordinate Fe cation.

The protein belongs to the ferrochelatase family.

Its subcellular location is the cytoplasm. The enzyme catalyses heme b + 2 H(+) = protoporphyrin IX + Fe(2+). It participates in porphyrin-containing compound metabolism; protoheme biosynthesis; protoheme from protoporphyrin-IX: step 1/1. Its function is as follows. Catalyzes the ferrous insertion into protoporphyrin IX. The sequence is that of Ferrochelatase from Thioalkalivibrio sulfidiphilus (strain HL-EbGR7).